Here is a 195-residue protein sequence, read N- to C-terminus: NADH-quinone oxidoreductase subunit C (195 aa).

The protein belongs to the complex I 30 kDa subunit family. NDH-1 is composed of 14 different subunits. Subunits NuoB, C, D, E, F, and G constitute the peripheral sector of the complex.

The protein localises to the cell inner membrane. It catalyses the reaction a quinone + NADH + 5 H(+)(in) = a quinol + NAD(+) + 4 H(+)(out). In terms of biological role, NDH-1 shuttles electrons from NADH, via FMN and iron-sulfur (Fe-S) centers, to quinones in the respiratory chain. The immediate electron acceptor for the enzyme in this species is believed to be ubiquinone. Couples the redox reaction to proton translocation (for every two electrons transferred, four hydrogen ions are translocated across the cytoplasmic membrane), and thus conserves the redox energy in a proton gradient. This chain is NADH-quinone oxidoreductase subunit C, found in Laribacter hongkongensis (strain HLHK9).